We begin with the raw amino-acid sequence, 340 residues long: Eukaryotic translation initiation factor 3 subunit I (340 aa).

WD repeat units lie at residues 8-47, 50-91, 150-189, 194-233, and 291-330; these read GHER…RLGT, GHQG…KVWD, CTES…QLEN, EFDH…ILKT, and GHFG…FDFM.

The protein belongs to the eIF-3 subunit I family. In terms of assembly, component of the eukaryotic translation initiation factor 3 (eIF-3) complex.

The protein localises to the cytoplasm. Component of the eukaryotic translation initiation factor 3 (eIF-3) complex, which is involved in protein synthesis of a specialized repertoire of mRNAs and, together with other initiation factors, stimulates binding of mRNA and methionyl-tRNAi to the 40S ribosome. The eIF-3 complex specifically targets and initiates translation of a subset of mRNAs involved in cell proliferation. In Aspergillus fumigatus (strain CBS 144.89 / FGSC A1163 / CEA10) (Neosartorya fumigata), this protein is Eukaryotic translation initiation factor 3 subunit I (tif34).